Here is a 514-residue protein sequence, read N- to C-terminus: MQQLNPSEISEIIKGRIDNLDVSSQARNEGTVVSVSDGIVRIHGLADVMYGEMIEFPGGVYGMALNLEQDSVGAVILGAYDTLAEGMSAKCTGRILEVPVGKELLGRVVDALGNPIDGKGPLGNTQTDAVEKVAPGVIWRKSVDQPVQTGYKSVDAMIPVGRGQRELIIGDRQIGKTAMAIDAIINQKDSGIFCVYVAVGQKRSTVANIVRKLEENGALANTIVVVASASESAALQFLAPYAGCTMGEFFRDRGEDALIVYDDLSKQAVAYRQISLLLRRPPGREAYPGDVFYLHSRLLERASRVSEEYVEKFTNGAVTGKTGSLTALPIIETQAGDVSAFVPTNVISITDGQIFLESAMFNSGIRPAVNAGVSVSRVGGAAQTKIIKKLSGGIRTALAQYRELAAFAQFASDLDEATRKQLEHGQRVTELMKQKQYAPMSIADMALSLYAAERGFLTDVEVSKIGSFEQALIAFFNRDHAELMAKINVKGDFNDEIDAGLKAGIEKFKATQTW.

G170–T177 lines the ATP pocket.

This sequence belongs to the ATPase alpha/beta chains family. F-type ATPases have 2 components, CF(1) - the catalytic core - and CF(0) - the membrane proton channel. CF(1) has five subunits: alpha(3), beta(3), gamma(1), delta(1), epsilon(1). CF(0) has three main subunits: a(1), b(2) and c(9-12). The alpha and beta chains form an alternating ring which encloses part of the gamma chain. CF(1) is attached to CF(0) by a central stalk formed by the gamma and epsilon chains, while a peripheral stalk is formed by the delta and b chains.

It is found in the cell inner membrane. The catalysed reaction is ATP + H2O + 4 H(+)(in) = ADP + phosphate + 5 H(+)(out). Functionally, produces ATP from ADP in the presence of a proton gradient across the membrane. The alpha chain is a regulatory subunit. This is ATP synthase subunit alpha from Pseudomonas putida (strain GB-1).